We begin with the raw amino-acid sequence, 1029 residues long: Chitin synthase 3 (1029 aa).

The tract at residues 1–29 (MAYYSRPASAGAARAQDDQDPYPYYPDPD) is disordered. Asn-37 carries N-linked (GlcNAc...) asparagine glycosylation. Residues 46-71 (ASGAASSASHTSPFSDAHAASASPAS) are compositionally biased toward low complexity. Disordered regions lie at residues 46-105 (ASGA…SRMP) and 168-209 (LAHR…AGTS). Polar residues predominate over residues 76 to 91 (SHQQVSAHAPQQQHMS). Residues 191–202 (AHDEKYAYDRPD) show a composition bias toward basic and acidic residues. Asn-401, Asn-514, Asn-527, and Asn-689 each carry an N-linked (GlcNAc...) asparagine glycan. Helical transmembrane passes span 723–743 (FYSFVNMCFAWFGLANYYIFF), 760–780 (IGVFNVFMQYIYLGTVVSSFI), 796–816 (AAVVVFALLTVYMMVAAVLCL), 830–850 (AQMVVSLLATYGVYLISSLLA), 860–880 (FLQYLLLAPTYINILNIYAFC), 963–983 (VVLAWALSNGVLAAFILNGDA), and 998–1018 (VYMVLVLIFVAGMACIRFIGS).

This sequence belongs to the chitin synthase family. Class I subfamily.

The protein resides in the cell membrane. The protein localises to the cytoplasmic vesicle membrane. It carries out the reaction [(1-&gt;4)-N-acetyl-beta-D-glucosaminyl](n) + UDP-N-acetyl-alpha-D-glucosamine = [(1-&gt;4)-N-acetyl-beta-D-glucosaminyl](n+1) + UDP + H(+). Its function is as follows. Polymerizes chitin, a structural polymer of the cell wall and septum, by transferring the sugar moiety of UDP-GlcNAc to the non-reducing end of the growing chitin polymer. This is Chitin synthase 3 from Mycosarcoma maydis (Corn smut fungus).